The primary structure comprises 772 residues: DnaJ homolog subfamily C member 16 (772 aa).

An N-terminal signal peptide occupies residues 1-25 (MELKRLGVSWRFLMVLVLILQSLSA). Over 26–533 (LDFDPYRVLG…ESLLHSNWRE (508 aa)) the chain is Cytoplasmic. Residues 29–93 (DPYRVLGVSR…EKRTNYDHYG (65 aa)) enclose the J domain. The Thioredoxin domain maps to 119–245 (FDESFFHFPF…LRQFVESLLP (127 aa)). Residues 534 to 554 (MMPLLSLIFSALFILFGTVMV) form a helical; Anchor for type IV membrane protein membrane-spanning segment. The Extracellular segment spans residues 555–772 (QAFSDSNEER…FYIPSWPELD (218 aa)). Positions 560–591 (SNEERESHPADKEEVPEKAGKTEPSFTKESSS) are disordered. A compositionally biased stretch (basic and acidic residues) spans 561–580 (NEERESHPADKEEVPEKAGK). Asparagine 629 carries an N-linked (GlcNAc...) asparagine glycan.

It localises to the endoplasmic reticulum membrane. In terms of biological role, plays an important role in regulating the size of autophagosomes during the formation process. In Mus musculus (Mouse), this protein is DnaJ homolog subfamily C member 16 (Dnajc16).